Here is a 247-residue protein sequence, read N- to C-terminus: Tetraspanin-18 (247 aa).

Over 1 to 15 (MEGDCLSCMKYLMFL) the chain is Cytoplasmic. Residues 16 to 36 (FNFFIFLGGACLLGVGIWVIV) form a helical membrane-spanning segment. The Extracellular portion of the chain corresponds to 37–49 (DPTGFREIVAANP). A helical membrane pass occupies residues 50–70 (LLFTGAYIMLAMGAMLFLLGF). The Cytoplasmic segment spans residues 71–82 (LGCCGAIRENKC). A helical transmembrane segment spans residues 83-103 (LLLFFFMFILLIFLAELSAAI). The Extracellular portion of the chain corresponds to 104 to 222 (LAFIFRENLT…SFETYVYLAG (119 aa)). Asn111 and Asn129 each carry an N-linked (GlcNAc...) asparagine glycan. A helical membrane pass occupies residues 223–243 (ALAIGVLAIELFAMIFAMCLF). At 244-247 (RGIQ) the chain is on the cytoplasmic side.

It belongs to the tetraspanin (TM4SF) family.

The protein resides in the membrane. Its function is as follows. Maintains CDH6 protein and promotes CDH6-dependent adherens junctions, inhibiting neural crest migration. In Gallus gallus (Chicken), this protein is Tetraspanin-18.